We begin with the raw amino-acid sequence, 375 residues long: Chaperone protein DnaJ (375 aa).

The 66-residue stretch at 5 to 70 (DYYEVLGVSR…QKRAAYDQFG (66 aa)) folds into the J domain. Residues 131–209 (GTTVKIRVPS…CHGSGYVEEQ (79 aa)) form a CR-type zinc finger. Residues cysteine 144, cysteine 147, cysteine 161, cysteine 164, cysteine 183, cysteine 186, cysteine 197, and cysteine 200 each coordinate Zn(2+). 4 CXXCXGXG motif repeats span residues 144–151 (CKSCSGSG), 161–168 (CGTCNGAG), 183–190 (CPRCRGAG), and 197–204 (CRSCHGSG).

This sequence belongs to the DnaJ family. In terms of assembly, homodimer. Zn(2+) is required as a cofactor.

It localises to the cytoplasm. In terms of biological role, participates actively in the response to hyperosmotic and heat shock by preventing the aggregation of stress-denatured proteins and by disaggregating proteins, also in an autonomous, DnaK-independent fashion. Unfolded proteins bind initially to DnaJ; upon interaction with the DnaJ-bound protein, DnaK hydrolyzes its bound ATP, resulting in the formation of a stable complex. GrpE releases ADP from DnaK; ATP binding to DnaK triggers the release of the substrate protein, thus completing the reaction cycle. Several rounds of ATP-dependent interactions between DnaJ, DnaK and GrpE are required for fully efficient folding. Also involved, together with DnaK and GrpE, in the DNA replication of plasmids through activation of initiation proteins. The chain is Chaperone protein DnaJ from Hahella chejuensis (strain KCTC 2396).